We begin with the raw amino-acid sequence, 113 residues long: Large ribosomal subunit protein eL31 (113 aa).

The protein belongs to the eukaryotic ribosomal protein eL31 family.

This chain is Large ribosomal subunit protein eL31 (RPL31), found in Candida glabrata (strain ATCC 2001 / BCRC 20586 / JCM 3761 / NBRC 0622 / NRRL Y-65 / CBS 138) (Yeast).